Here is a 504-residue protein sequence, read N- to C-terminus: Arabinose import ATP-binding protein AraG (504 aa).

2 ABC transporter domains span residues 8 to 243 (LSFR…MVGR) and 256 to 499 (YGEE…MPKV). 40–47 (GENGAGKS) is an ATP binding site.

This sequence belongs to the ABC transporter superfamily. Arabinose importer (TC 3.A.1.2.2) family. In terms of assembly, the complex is composed of two ATP-binding proteins (AraG), two transmembrane proteins (AraH) and a solute-binding protein (AraF).

The protein resides in the cell inner membrane. It catalyses the reaction L-arabinose(out) + ATP + H2O = L-arabinose(in) + ADP + phosphate + H(+). In terms of biological role, part of the ABC transporter complex AraFGH involved in arabinose import. Responsible for energy coupling to the transport system. This chain is Arabinose import ATP-binding protein AraG, found in Shigella flexneri.